Consider the following 257-residue polypeptide: uncharacterized protein (257 aa).

Residues 7-27 (LFLCVSFLLITIFIGGGGFMN) traverse the membrane as a helical segment.

The protein belongs to the staphylococcal tandem lipoprotein family.

Its subcellular location is the cell membrane. This is an uncharacterized protein from Staphylococcus epidermidis (strain ATCC 12228 / FDA PCI 1200).